Here is a 449-residue protein sequence, read N- to C-terminus: UDP-N-acetylmuramoylalanine--D-glutamate ligase (449 aa).

118–124 lines the ATP pocket; that stretch reads GTNGKTT.

Belongs to the MurCDEF family.

The protein resides in the cytoplasm. It carries out the reaction UDP-N-acetyl-alpha-D-muramoyl-L-alanine + D-glutamate + ATP = UDP-N-acetyl-alpha-D-muramoyl-L-alanyl-D-glutamate + ADP + phosphate + H(+). It functions in the pathway cell wall biogenesis; peptidoglycan biosynthesis. Cell wall formation. Catalyzes the addition of glutamate to the nucleotide precursor UDP-N-acetylmuramoyl-L-alanine (UMA). This chain is UDP-N-acetylmuramoylalanine--D-glutamate ligase, found in Staphylococcus epidermidis (strain ATCC 35984 / DSM 28319 / BCRC 17069 / CCUG 31568 / BM 3577 / RP62A).